Consider the following 406-residue polypeptide: Phosphorylase b kinase gamma catalytic chain, liver/testis isoform (406 aa).

Residues 24–291 (YDPKDVIGRG…AEQALQHPFF (268 aa)) enclose the Protein kinase domain. ATP is bound by residues 30 to 38 (IGRGVSSVV) and Lys53. The active-site Proton acceptor is the Asp153. Positions 306–330 (QRFRVAVWTVLAAGRVALSTHRVRP) are calmodulin-binding (domain-N). Ser345 is modified (phosphoserine). Residues 346–370 (VRHLIDNCAFRLYGHWVKKGEQQNR) form a calmodulin-binding (domain-C) region.

The protein belongs to the protein kinase superfamily. CAMK Ser/Thr protein kinase family. Hexadecamer of 4 heterotetramers, each composed of alpha, beta, gamma, and delta subunits. Alpha (PHKA1 or PHKA2) and beta (PHKB) are regulatory subunits, gamma (PHKG1 or PHKG2) is the catalytic subunit, and delta is calmodulin.

It catalyses the reaction 2 ATP + phosphorylase b = 2 ADP + phosphorylase a.. Catalytic subunit of the phosphorylase b kinase (PHK), which mediates the neural and hormonal regulation of glycogen breakdown (glycogenolysis) by phosphorylating and thereby activating glycogen phosphorylase. May regulate glycogeneolysis in the testis. In vitro, phosphorylates PYGM. This is Phosphorylase b kinase gamma catalytic chain, liver/testis isoform (PHKG2) from Homo sapiens (Human).